Here is a 56-residue protein sequence, read N- to C-terminus: Large ribosomal subunit protein bL32 (56 aa).

Positions 1 to 26 (MAVQQNKKSRSKRGMRRSHDALSTAQ) are disordered. The span at 7–16 (KKSRSKRGMR) shows a compositional bias: basic residues.

It belongs to the bacterial ribosomal protein bL32 family.

This Shewanella denitrificans (strain OS217 / ATCC BAA-1090 / DSM 15013) protein is Large ribosomal subunit protein bL32.